A 675-amino-acid chain; its full sequence is MTGRLGIDDVRPRILDGNPAKAVVGEIVPVSAIVWREGHDAIAATLNVSGPEDSSVAAEPIQIHMRPTPDNQDQSNAFFVPDVPGNWTFRVDAWSDPMATWRHAITTKIEAGQGSDELYNDFEHGAQLFERAAENLSKEDRTALFDVASSLRRGGDVRARLAPALTASVTHLLELNPLRELVTMGENLQVRVERRAALVNSWYELFPRSTGGWDESGTPVHGTFATTAQALERVAKMGFDTVYFPPIHPIGEVNRKGRNNTLTPEPHDVGSPWAIGSKDGGHDATHPRLGTIEDFQALLARARELNLEVALDLALQAAPDHPWAQEHREFFTVLADGTIAYAENPPKKYQDIYPINFDNDAPKIYEEVYRVVKFWVDLGVTTFRVDNPHTKPANFWQWLISAIHKSNPEVIFLAEAFTRPARLYGLAKIGFSQSYTYFTWKVTKEELTEFATEIARMADISRPNLFVNTPDILHASLQHGGRAMFAIRAALAATMSPVWGVYSGYELFEHEAVKPGSEEYLDSEKYELRPRDFEGALERGDSLEDYIALLNQIRRANPALQQLRNIHFHEADNDQIIAYSKVDALTGNTVLIVVNLDPRSAREATVRLDLGALGLEAGAQFEVRDAITGSRYLWSETNFVRLEPLRDVAHIFVLPELPASRRERLAWREIKTYRA.

3 residues coordinate alpha-maltose 1-phosphate: lysine 256, glutamine 316, and aspartate 351. Aspartate 386 (nucleophile) is an active-site residue. Asparagine 387 serves as a coordination point for alpha-maltose 1-phosphate. The active-site Proton donor is the glutamate 415. Residue 525–526 (KY) participates in alpha-maltose 1-phosphate binding.

It belongs to the glycosyl hydrolase 13 family. GlgE subfamily. In terms of assembly, homodimer.

It catalyses the reaction alpha-maltose 1-phosphate + [(1-&gt;4)-alpha-D-glucosyl](n) = [(1-&gt;4)-alpha-D-glucosyl](n+2) + phosphate. Maltosyltransferase that uses maltose 1-phosphate (M1P) as the sugar donor to elongate linear or branched alpha-(1-&gt;4)-glucans. Is involved in a branched alpha-glucan biosynthetic pathway from trehalose, together with TreS, Mak and GlgB. The polypeptide is Alpha-1,4-glucan:maltose-1-phosphate maltosyltransferase (Corynebacterium glutamicum (strain ATCC 13032 / DSM 20300 / JCM 1318 / BCRC 11384 / CCUG 27702 / LMG 3730 / NBRC 12168 / NCIMB 10025 / NRRL B-2784 / 534)).